The sequence spans 310 residues: Light-independent protochlorophyllide reductase iron-sulfur ATP-binding protein (310 aa).

ATP-binding positions include 53 to 58 (GIGKST) and lysine 82. Position 57 (serine 57) interacts with Mg(2+). [4Fe-4S] cluster is bound by residues cysteine 138 and cysteine 172. Residues 223-224 (NR) and 247-249 (PAL) contribute to the ATP site.

It belongs to the NifH/BchL/ChlL family. In terms of assembly, homodimer. Protochlorophyllide reductase is composed of three subunits; BchL, BchN and BchB. The cofactor is [4Fe-4S] cluster.

It catalyses the reaction chlorophyllide a + oxidized 2[4Fe-4S]-[ferredoxin] + 2 ADP + 2 phosphate = protochlorophyllide a + reduced 2[4Fe-4S]-[ferredoxin] + 2 ATP + 2 H2O. It functions in the pathway porphyrin-containing compound metabolism; bacteriochlorophyll biosynthesis (light-independent). Component of the dark-operative protochlorophyllide reductase (DPOR) that uses Mg-ATP and reduced ferredoxin to reduce ring D of protochlorophyllide (Pchlide) to form chlorophyllide a (Chlide). This reaction is light-independent. The L component serves as a unique electron donor to the NB-component of the complex, and binds Mg-ATP. The chain is Light-independent protochlorophyllide reductase iron-sulfur ATP-binding protein from Rhodopseudomonas palustris (strain BisA53).